The chain runs to 322 residues: Corticotropin-releasing factor-binding protein (322 aa).

Positions 1–24 (MSPNFKLQCHFTLILLTALRGESR) are cleaved as a signal peptide. Disulfide bonds link Cys60–Cys81, Cys104–Cys141, Cys183–Cys205, Cys237–Cys264, and Cys277–Cys318. N-linked (GlcNAc...) asparagine glycosylation occurs at Asn204.

Belongs to the CRF-binding protein family.

Its subcellular location is the secreted. Functionally, binds CRF and inactivates it. May prevent inappropriate pituitary-adrenal stimulation in pregnancy. The sequence is that of Corticotropin-releasing factor-binding protein (Crhbp) from Rattus norvegicus (Rat).